The chain runs to 335 residues: Nucleoid-associated protein PP_0973 (335 aa).

This sequence belongs to the YejK family.

Its subcellular location is the cytoplasm. The protein resides in the nucleoid. The protein is Nucleoid-associated protein PP_0973 of Pseudomonas putida (strain ATCC 47054 / DSM 6125 / CFBP 8728 / NCIMB 11950 / KT2440).